Reading from the N-terminus, the 680-residue chain is Potassium-transporting ATPase ATP-binding subunit (680 aa).

Helical transmembrane passes span 37-57, 69-89, 223-243, and 257-277; these read VIFV…LDVA, IAAW…VAEG, ILLS…WGLA, and ALLV…IGIA. D307 (4-aspartylphosphate intermediate) is an active-site residue. ATP contacts are provided by residues D344, E348, 375–382, and K393; that span reads FTAETRLS. Mg(2+) is bound by residues D516 and D520. 3 helical membrane passes run 586–606, 614–634, and 652–672; these read FAII…LNIM, AILS…PLAL, and LLVY…LIDL.

This sequence belongs to the cation transport ATPase (P-type) (TC 3.A.3) family. Type IA subfamily. The system is composed of three essential subunits: KdpA, KdpB and KdpC.

Its subcellular location is the cell inner membrane. The catalysed reaction is K(+)(out) + ATP + H2O = K(+)(in) + ADP + phosphate + H(+). In terms of biological role, part of the high-affinity ATP-driven potassium transport (or Kdp) system, which catalyzes the hydrolysis of ATP coupled with the electrogenic transport of potassium into the cytoplasm. This subunit is responsible for energy coupling to the transport system and for the release of the potassium ions to the cytoplasm. The polypeptide is Potassium-transporting ATPase ATP-binding subunit (Rhizobium meliloti (strain 1021) (Ensifer meliloti)).